A 334-amino-acid polypeptide reads, in one-letter code: CRISPR-associated endonuclease Cas1 (334 aa).

Glu-161, His-226, and Glu-241 together coordinate Mn(2+).

It belongs to the CRISPR-associated endonuclease Cas1 family. In terms of assembly, homodimer, forms a heterotetramer with a Cas2 homodimer. Mg(2+) is required as a cofactor. It depends on Mn(2+) as a cofactor.

Functionally, CRISPR (clustered regularly interspaced short palindromic repeat), is an adaptive immune system that provides protection against mobile genetic elements (viruses, transposable elements and conjugative plasmids). CRISPR clusters contain spacers, sequences complementary to antecedent mobile elements, and target invading nucleic acids. CRISPR clusters are transcribed and processed into CRISPR RNA (crRNA). Acts as a dsDNA endonuclease. Involved in the integration of spacer DNA into the CRISPR cassette. The polypeptide is CRISPR-associated endonuclease Cas1 (Methanothermobacter thermautotrophicus (strain ATCC 29096 / DSM 1053 / JCM 10044 / NBRC 100330 / Delta H) (Methanobacterium thermoautotrophicum)).